The sequence spans 246 residues: tRNA pseudouridine synthase A (246 aa).

Residue Asp-53 is the Nucleophile of the active site. Tyr-111 is a substrate binding site.

This sequence belongs to the tRNA pseudouridine synthase TruA family. As to quaternary structure, homodimer.

The enzyme catalyses uridine(38/39/40) in tRNA = pseudouridine(38/39/40) in tRNA. Its function is as follows. Formation of pseudouridine at positions 38, 39 and 40 in the anticodon stem and loop of transfer RNAs. This chain is tRNA pseudouridine synthase A, found in Anoxybacillus flavithermus (strain DSM 21510 / WK1).